Consider the following 395-residue polypeptide: MLRWITAGESHGPALVAMLEGMVAGVEVTSEDISTQLARRRLGYGRGARMKFEADKVTIVGGVRHGRTLGGPIAVEVGNTEWPKWETIMSADPVDAELLADQARNAPLTRPRPGHADYSGMLKYGFDDARPVLERASARETAARVAAATFARSFLRQVFGVEVLSHVISIGASDPYVGPEPTASDLAAIDASPVRAFDKAAEESMIAEIEAAKRDGDTLGGVVEVVIHGLPVGLGSFISGADRLDARLASALMGIQAIKGVEVGDGFETARRRGSQAHDEMRPGPDGILRSTNRAGGLEGGMTNGEALRVRAAMKPISTVPRALATVDMSTGEEAVAIHQRSDVCAVPAAGVVAEAMVALVVAQAALEKFGGDSVAETTANYERYASGVAARLAR.

NADP(+)-binding residues include arginine 40 and arginine 46. Residues arginine 135–serine 137 and glutamine 256–alanine 257 each bind FMN. Residues arginine 272–proline 283 are compositionally biased toward basic and acidic residues. The tract at residues arginine 272–glycine 296 is disordered. FMN is bound by residues glycine 300, lysine 315–threonine 319, and arginine 341.

Belongs to the chorismate synthase family. In terms of assembly, homotetramer. The cofactor is FMNH2.

It carries out the reaction 5-O-(1-carboxyvinyl)-3-phosphoshikimate = chorismate + phosphate. It functions in the pathway metabolic intermediate biosynthesis; chorismate biosynthesis; chorismate from D-erythrose 4-phosphate and phosphoenolpyruvate: step 7/7. Its function is as follows. Catalyzes the anti-1,4-elimination of the C-3 phosphate and the C-6 proR hydrogen from 5-enolpyruvylshikimate-3-phosphate (EPSP) to yield chorismate, which is the branch point compound that serves as the starting substrate for the three terminal pathways of aromatic amino acid biosynthesis. This reaction introduces a second double bond into the aromatic ring system. This chain is Chorismate synthase, found in Rhodococcus jostii (strain RHA1).